We begin with the raw amino-acid sequence, 187 residues long: Ribonuclease HII (187 aa).

Residues 1-187 (MIILGIDEAG…YKPVQVLLNE (187 aa)) enclose the RNase H type-2 domain. 3 residues coordinate a divalent metal cation: Asp7, Glu8, and Asp99.

It belongs to the RNase HII family. The cofactor is Mn(2+). It depends on Mg(2+) as a cofactor.

It is found in the cytoplasm. It catalyses the reaction Endonucleolytic cleavage to 5'-phosphomonoester.. Its function is as follows. Endonuclease that specifically degrades the RNA of RNA-DNA hybrids. This chain is Ribonuclease HII, found in Francisella tularensis subsp. tularensis (strain FSC 198).